Reading from the N-terminus, the 282-residue chain is uncharacterized protein (282 aa).

To M.tuberculosis Rv2161c and Rv3079c.

This is an uncharacterized protein from Mycobacterium tuberculosis (strain CDC 1551 / Oshkosh).